The chain runs to 1486 residues: Chromosome partition protein MukB (1486 aa).

34-41 (GGNGAGKS) is a binding site for ATP. 3 coiled-coil regions span residues 326 to 418 (LEAD…QYNQ), 444 to 480 (LETF…QAYQ), and 509 to 603 (RHLA…RAPV). The segment at 666-783 (PGGSEDQRLN…EVPLFGRAAR (118 aa)) is flexible hinge. 3 coiled-coil regions span residues 835 to 923 (EAEI…AKLE), 977 to 1115 (EMLS…TAKA), and 1209 to 1266 (VEAI…QNVS).

The protein belongs to the SMC family. MukB subfamily. Homodimerization via its hinge domain. Binds to DNA via its C-terminal region. Interacts, and probably forms a ternary complex, with MukE and MukF via its C-terminal region. The complex formation is stimulated by calcium or magnesium. Interacts with tubulin-related protein FtsZ.

It is found in the cytoplasm. It localises to the nucleoid. Plays a central role in chromosome condensation, segregation and cell cycle progression. Functions as a homodimer, which is essential for chromosome partition. Involved in negative DNA supercoiling in vivo, and by this means organize and compact chromosomes. May achieve or facilitate chromosome segregation by condensation DNA from both sides of a centrally located replisome during cell division. The polypeptide is Chromosome partition protein MukB (Escherichia coli O157:H7).